The following is a 354-amino-acid chain: Ribosomal RNA large subunit methyltransferase M (354 aa).

Residues S183, 216-219 (SPGG), D235, D255, and D271 contribute to the S-adenosyl-L-methionine site. The active-site Proton acceptor is K300.

Belongs to the class I-like SAM-binding methyltransferase superfamily. RNA methyltransferase RlmE family. RlmM subfamily. Monomer.

Its subcellular location is the cytoplasm. The catalysed reaction is cytidine(2498) in 23S rRNA + S-adenosyl-L-methionine = 2'-O-methylcytidine(2498) in 23S rRNA + S-adenosyl-L-homocysteine + H(+). In terms of biological role, catalyzes the 2'-O-methylation at nucleotide C2498 in 23S rRNA. This is Ribosomal RNA large subunit methyltransferase M from Pseudomonas putida (strain ATCC 700007 / DSM 6899 / JCM 31910 / BCRC 17059 / LMG 24140 / F1).